The chain runs to 755 residues: MLAKLRQRLAFLTRTNGTIDWGRGIRTFCGMAVPYLGGMALGNPQLGLGVGLASQLILLADMGGLYSVRLKTIFGAWVGAAIAMAVGTIVPDGWGLGLAITGFVLFASGYLAVYGEQGAMVGIVTTFAFLLGAQNVSTDSFEFTSLAIGGMWSLILAIFIWPFRPNQPLRQMVANNYSILGNYLRAMAAANFSPDDPQAQQLVVKLRQNLLKSRQTLVASQRGLWGQSKLRELLLVLIEHTERLNKCLMLLNEIVNFHNLPQLQTVEILMEDAFNALGEVCLDLGQMVLGKRRIPNTNRLQLLVQALQQQKKLQRQALTEDFNDYNSLTTVTQLVNHLENLIKQLEQTIQTAELLQNPQLFSDNNSNDQGKLNKVRLMPWWDPLGSNFHLNSPLLRHGLRMALGGMVGATIAHLTQIPYGFWIVITLIFVLKPDFSLTFQRLSNRLLGTFLGVLVMSIALKLIQDPQLLSWLGILAIAMGMALLRFHYSVAVFFITAFALILKAIDPSVPTEYALLSRLVCTLIGSAIALGLAFSFLRQSENLRFTQASVRMLTNLEQYFQQLIPALLGKESINKKEAERVRNETRLAATAMQIALDRLLSDPSTPLEKQEPALTMTNYLARLSRGFRVLISHLENSSGSNPPPPIKLFTEQVQQSLENLRFSLEHQSSPAALPPMATTIKEIREYHQSYQAQRITEINQKQDFTPTRRYLDDFNLVVEECQQIYQRLETIHSAIARFTDSPQLANGIKLKSQPS.

Transmembrane regions (helical) follow at residues 46–66 (LGLG…GGLY), 70–90 (LKTI…GTIV), 93–113 (GWGL…YLAV), 118–138 (GAMV…NVST), 143–163 (FTSL…IWPF), 411–431 (IAHL…IFVL), 446–466 (LLGT…IQDP), 482–502 (ALLR…ALIL), and 514–534 (ALLS…GLAF).

It belongs to the YccS/YhfK family.

The protein resides in the cell membrane. This is an uncharacterized protein from Synechocystis sp. (strain ATCC 27184 / PCC 6803 / Kazusa).